Here is a 103-residue protein sequence, read N- to C-terminus: Muscarinic toxin BM14 (103 aa).

The N-terminal stretch at 1–21 is a signal peptide; the sequence is MKTLLLTLVVVTIICLDLGYT. 5 disulfide bridges follow: cysteine 24-cysteine 45, cysteine 27-cysteine 37, cysteine 38-cysteine 72, cysteine 76-cysteine 90, and cysteine 91-cysteine 96.

It belongs to the three-finger toxin family. Ancestral subfamily. Orphan group XVII sub-subfamily. In terms of tissue distribution, expressed by the venom gland.

The protein localises to the secreted. In terms of biological role, this toxin inhibits the binding of [3H]quinuclidinyl benzilate to the M2 muscarinic acetylcholine (mAchR) receptor subtype (CHRM2). This chain is Muscarinic toxin BM14, found in Bungarus multicinctus (Many-banded krait).